Consider the following 380-residue polypeptide: UDP-N-acetylglucosamine 2-epimerase (380 aa).

This sequence belongs to the UDP-N-acetylglucosamine 2-epimerase family.

The protein resides in the cytoplasm. The enzyme catalyses UDP-N-acetyl-alpha-D-glucosamine = UDP-N-acetyl-alpha-D-mannosamine. The protein operates within cell wall biogenesis; poly(glycerol phosphate) teichoic acid biosynthesis. In terms of biological role, catalyzes the conversion of UDP-N-acetylglucosamine into UDP-N-acetylmannosamine, a precursor of the teichoic acid linkage unit. This is UDP-N-acetylglucosamine 2-epimerase (mnaA) from Bacillus subtilis (strain 168).